The primary structure comprises 499 residues: Acetylcholine receptor subunit alpha-type acr-16 (499 aa).

The signal sequence occupies residues Met1 to Gly19. At Ser20–Tyr232 the chain is on the extracellular side. N-linked (GlcNAc...) asparagine glycosylation is found at Asn43 and Asn93. 2 disulfides stabilise this stretch: Cys147–Cys161 and Cys211–Cys212. 3 consecutive transmembrane segments (helical) span residues Gly233–Leu253, Ile261–Met281, and Val289–Phe309. Over Thr310–Arg473 the chain is Cytoplasmic. A helical membrane pass occupies residues Leu474 to Ala494. At Pro495 to Ala499 the chain is on the extracellular side.

It belongs to the ligand-gated ion channel (TC 1.A.9) family. Acetylcholine receptor (TC 1.A.9.1) subfamily.

It localises to the postsynaptic cell membrane. It is found in the cell membrane. After binding acetylcholine, the AChR responds by an extensive change in conformation that affects all subunits and leads to opening of an ion-conducting channel across the plasma membrane. A subunit of the levamisole-insensitive nicotinic receptor. In Caenorhabditis briggsae, this protein is Acetylcholine receptor subunit alpha-type acr-16.